The chain runs to 539 residues: CTP synthase (539 aa).

The segment at 1 to 267 is amidoligase domain; that stretch reads MTKYIFVTGG…DQKVCDFLHL (267 aa). A CTP-binding site is contributed by serine 13. Residue serine 13 coordinates UTP. 14-19 contributes to the ATP binding site; that stretch reads SLGKGI. Position 54 (tyrosine 54) interacts with L-glutamine. Aspartate 71 is a binding site for ATP. Mg(2+) contacts are provided by aspartate 71 and glutamate 141. CTP-binding positions include 148–150, 188–193, and lysine 224; these read DIE and KTKPTQ. Residues 188 to 193 and lysine 224 contribute to the UTP site; that span reads KTKPTQ. One can recognise a Glutamine amidotransferase type-1 domain in the interval 294–537; sequence KITLVGKYVE…IGAASGLPAQ (244 aa). L-glutamine is bound at residue glycine 356. Catalysis depends on cysteine 383, which acts as the Nucleophile; for glutamine hydrolysis. Residues 384 to 387, glutamate 407, and arginine 465 each bind L-glutamine; that span reads LGMQ. Residues histidine 510 and glutamate 512 contribute to the active site.

It belongs to the CTP synthase family. As to quaternary structure, homotetramer.

It catalyses the reaction UTP + L-glutamine + ATP + H2O = CTP + L-glutamate + ADP + phosphate + 2 H(+). The catalysed reaction is L-glutamine + H2O = L-glutamate + NH4(+). It carries out the reaction UTP + NH4(+) + ATP = CTP + ADP + phosphate + 2 H(+). Its pathway is pyrimidine metabolism; CTP biosynthesis via de novo pathway; CTP from UDP: step 2/2. With respect to regulation, allosterically activated by GTP, when glutamine is the substrate; GTP has no effect on the reaction when ammonia is the substrate. The allosteric effector GTP functions by stabilizing the protein conformation that binds the tetrahedral intermediate(s) formed during glutamine hydrolysis. Inhibited by the product CTP, via allosteric rather than competitive inhibition. In terms of biological role, catalyzes the ATP-dependent amination of UTP to CTP with either L-glutamine or ammonia as the source of nitrogen. Regulates intracellular CTP levels through interactions with the four ribonucleotide triphosphates. This is CTP synthase from Lactobacillus acidophilus (strain ATCC 700396 / NCK56 / N2 / NCFM).